The chain runs to 344 residues: N-acetyl-gamma-glutamyl-phosphate reductase (344 aa).

The active site involves Cys-148.

This sequence belongs to the NAGSA dehydrogenase family. Type 1 subfamily.

It localises to the cytoplasm. The catalysed reaction is N-acetyl-L-glutamate 5-semialdehyde + phosphate + NADP(+) = N-acetyl-L-glutamyl 5-phosphate + NADPH + H(+). The protein operates within amino-acid biosynthesis; L-arginine biosynthesis; N(2)-acetyl-L-ornithine from L-glutamate: step 3/4. Functionally, catalyzes the NADPH-dependent reduction of N-acetyl-5-glutamyl phosphate to yield N-acetyl-L-glutamate 5-semialdehyde. The chain is N-acetyl-gamma-glutamyl-phosphate reductase from Geobacillus thermodenitrificans (strain NG80-2).